A 251-amino-acid chain; its full sequence is Triosephosphate isomerase (251 aa).

Substrate is bound at residue N9–K11. H95 functions as the Electrophile in the catalytic mechanism. The active-site Proton acceptor is the E167. Substrate is bound by residues G173, S212, and G233–G234.

Belongs to the triosephosphate isomerase family. In terms of assembly, homodimer.

The protein localises to the cytoplasm. It carries out the reaction D-glyceraldehyde 3-phosphate = dihydroxyacetone phosphate. It participates in carbohydrate biosynthesis; gluconeogenesis. The protein operates within carbohydrate degradation; glycolysis; D-glyceraldehyde 3-phosphate from glycerone phosphate: step 1/1. Involved in the gluconeogenesis. Catalyzes stereospecifically the conversion of dihydroxyacetone phosphate (DHAP) to D-glyceraldehyde-3-phosphate (G3P). The chain is Triosephosphate isomerase from Pseudomonas syringae pv. syringae (strain B728a).